The chain runs to 419 residues: Acetyl transferase GW6a (419 aa).

In terms of domain architecture, N-acetyltransferase spans 12 to 210 (VRVREFDVEK…GHPVHAHRLP (199 aa)). A disordered region spans residues 44–68 (VHDHADDGDGAAAKEKKKTKTKTKK). Basic residues predominate over residues 58–68 (EKKKTKTKTKK).

It belongs to the acetyltransferase family. Interacts (via C-terminus) with HDR3 (via N-terminus). Post-translationally, ubiquitinated at Lys-63 by HDR3. Polyubiquitination of GW6A delays its degradation by the 26S proteasome and enhances GW6A histone acetyltransferase activity. As to expression, expressed in roots, leaf blades, leaf sheaths, shoot apical meristem and young panicles.

The protein resides in the nucleus. Possesses intrinsic histone acetyltransferase activity and acts as a positive regulator of grain weight, hull size, yield, and plant biomass. Regulates postitively grain weight and yield by enlarging spikelet hulls via increasing cell number and accelerating grain filling. In vitro, catalyzes the acetylation of histone H4 at Lys-6 (H4K5ac), Lys-13 (H4K12ac) and Lys-17 (H4K16ac). Involved in the regulation of plastochron (the time interval between leaf initiation event). In Oryza sativa subsp. japonica (Rice), this protein is Acetyl transferase GW6a.